A 151-amino-acid chain; its full sequence is 6,7-dimethyl-8-ribityllumazine synthase (151 aa).

5-amino-6-(D-ribitylamino)uracil-binding positions include phenylalanine 15, 49 to 51, and 73 to 75; these read AVE and AVI. Residue 78 to 79 participates in (2S)-2-hydroxy-3-oxobutyl phosphate binding; that stretch reads ET. The active-site Proton donor is histidine 81. Phenylalanine 106 contributes to the 5-amino-6-(D-ribitylamino)uracil binding site. Arginine 120 is a binding site for (2S)-2-hydroxy-3-oxobutyl phosphate.

The protein belongs to the DMRL synthase family. As to quaternary structure, forms an icosahedral capsid composed of 60 subunits, arranged as a dodecamer of pentamers.

The enzyme catalyses (2S)-2-hydroxy-3-oxobutyl phosphate + 5-amino-6-(D-ribitylamino)uracil = 6,7-dimethyl-8-(1-D-ribityl)lumazine + phosphate + 2 H2O + H(+). The protein operates within cofactor biosynthesis; riboflavin biosynthesis; riboflavin from 2-hydroxy-3-oxobutyl phosphate and 5-amino-6-(D-ribitylamino)uracil: step 1/2. Catalyzes the formation of 6,7-dimethyl-8-ribityllumazine by condensation of 5-amino-6-(D-ribitylamino)uracil with 3,4-dihydroxy-2-butanone 4-phosphate. This is the penultimate step in the biosynthesis of riboflavin. This Coxiella burnetii (strain Dugway 5J108-111) protein is 6,7-dimethyl-8-ribityllumazine synthase.